Reading from the N-terminus, the 517-residue chain is Sugar transport protein MST1 (517 aa).

Residues 1 to 25 are Cytoplasmic-facing; sequence MAGGVIVANDGDGSAVDHGGRLTFS. Residues 26–46 form a helical membrane-spanning segment; it reads VVITCLVAASGGLIFGYDVGI. At 47-83 the chain is on the extracellular side; that stretch reads SGGVSTMEPFLRRFFPGVVRRMAEARPGNEYCVYDSQ. A helical transmembrane segment spans residues 84–104; that stretch reads ALTAFTSSLYVAGLVASLVAS. Over 105-120 the chain is Cytoplasmic; sequence RVTRAMGRQAVMVMGG. Residues 121-141 traverse the membrane as a helical segment; the sequence is ALFFAGGAVTGFAVNIAMLIV. At 142–143 the chain is on the extracellular side; the sequence is GR. A helical membrane pass occupies residues 144-164; that stretch reads MLLGFGVGFTNQAAPLFLAEM. At 165-170 the chain is on the cytoplasmic side; sequence APTRWR. The helical transmembrane segment at 171-191 threads the bilayer; sequence GSLTAGFQFFLAVGVVIATVT. The Extracellular portion of the chain corresponds to 192 to 203; the sequence is NYFASRVPWGWR. Residues 204-224 traverse the membrane as a helical segment; sequence LSLGLAGAPAVVIFLGALFLT. The Cytoplasmic portion of the chain corresponds to 225-288; sequence DTPSSLVMRG…AARREYRPYL (64 aa). The helical transmembrane segment at 289 to 309 threads the bilayer; the sequence is VFAVAMPMFFQLTGVIVISFF. Residues 310–325 are Extracellular-facing; that stretch reads SPLVFRTVGFGSNAAL. Residues 326-346 form a helical membrane-spanning segment; sequence MGNVILGAVNLVCLMLSTLVI. The Cytoplasmic segment spans residues 347 to 352; sequence DRYGRK. Residues 353-373 form a helical membrane-spanning segment; the sequence is VLFMVGGAIMIIAQVGVAWIM. The Extracellular segment spans residues 374–389; that stretch reads GAQVGKNGSEAMARPY. The chain crosses the membrane as a helical span at residues 390-410; it reads AVAVVAFTCLHTAGFGWSWGP. The Cytoplasmic portion of the chain corresponds to 411–430; it reads LGWVIPGEIFPVDIRSAGQA. Residues 431–451 traverse the membrane as a helical segment; it reads MNVSIGLGLTFVQTQSFLAML. Residues 452 to 456 lie on the Extracellular side of the membrane; sequence CRFRY. A helical transmembrane segment spans residues 457 to 477; the sequence is GTFAYYAAWVAVMTVFIAVFL. The Cytoplasmic segment spans residues 478–517; the sequence is PETKGVPLESMATVWARHWYWKRFAREQPKTSADEPTGTY.

This sequence belongs to the major facilitator superfamily. Sugar transporter (TC 2.A.1.1) family.

The protein localises to the membrane. Its function is as follows. Mediates active uptake of hexoses by sugar:proton symport. The polypeptide is Sugar transport protein MST1 (Oryza sativa subsp. japonica (Rice)).